The chain runs to 370 residues: WAT1-related protein At1g44800 (370 aa).

10 consecutive transmembrane segments (helical) span residues 11–31 (PILA…ITMV), 41–61 (VLAT…ALMF), 67–87 (PKMT…EPLM), 102–122 (SYTS…ALIF), 142–162 (VITV…IEIV), 182–202 (WVLG…FFIL), 216–236 (LVTL…LIMV), 252–272 (AAVY…SIVI), 278–298 (VFTT…GALV), and 303–323 (IHLG…SVVW). EamA domains lie at 23–143 (AGMY…GTVI) and 195–322 (TWAA…YSVV).

Belongs to the drug/metabolite transporter (DMT) superfamily. Plant drug/metabolite exporter (P-DME) (TC 2.A.7.4) family.

The protein resides in the membrane. The chain is WAT1-related protein At1g44800 from Arabidopsis thaliana (Mouse-ear cress).